The sequence spans 152 residues: uncharacterized protein (152 aa).

Over 1–5 the chain is Cytoplasmic; sequence MWFPQ. A helical transmembrane segment spans residues 6–26; that stretch reads IIAGMAAGGAASAMTPGKVLF. Topologically, residues 27–38 are extracellular; that stretch reads TNALGLGCSRSR. A helical membrane pass occupies residues 39-59; the sequence is GLFLEMFGTAVLCFTVLMTAV. At 60–65 the chain is on the cytoplasmic side; the sequence is EKRETN. A helical membrane pass occupies residues 66-86; it reads FMAALPIGISLFMAHMALTGY. Residues 87–110 are Extracellular-facing; it reads TGTGVNPARSLGAAVAARYFPHYH. The NPA signature appears at 92 to 94; the sequence is NPA. The chain crosses the membrane as a helical span at residues 111 to 131; that stretch reads WIYWISPLLGAFLAWSVWQLL. Residues 132–152 lie on the Cytoplasmic side of the membrane; sequence QILDYTTYVNAEKAAGQKKED.

Belongs to the MIP/aquaporin (TC 1.A.8) family.

It is found in the membrane. This is an uncharacterized protein from Saccharomyces cerevisiae (strain YJM789) (Baker's yeast).